Reading from the N-terminus, the 100-residue chain is Small ribosomal subunit protein uS14 (100 aa).

The protein belongs to the universal ribosomal protein uS14 family. Part of the 30S ribosomal subunit. Contacts proteins S3 and S10.

Functionally, binds 16S rRNA, required for the assembly of 30S particles and may also be responsible for determining the conformation of the 16S rRNA at the A site. The polypeptide is Small ribosomal subunit protein uS14 (Prochlorococcus marinus (strain NATL1A)).